We begin with the raw amino-acid sequence, 256 residues long: MTDLKKAAQRAIELMDLTTLNDDDTDQKVIDLCHKAVTPAGNTAAICIYPRFIPIARKTLDELGAEDIQIATVTNFPHGNDDIAIAVLETRAAVAYGADEVDVVFPYRALMEGNETVGYELVKACKEACGEVLLKVIIESGVLADPALIRRASELSIDAGADFIKTSTGKVPVNATLEAAEIMLTVISEKNTKVGFKPAGGVRDAAQAAEFLGVAERILGADWVSPRTFRFGASSLLNSLLHTLELADAPKPTQGY.

D102 functions as the Proton donor/acceptor in the catalytic mechanism. K165 (schiff-base intermediate with acetaldehyde) is an active-site residue. Catalysis depends on K197, which acts as the Proton donor/acceptor.

This sequence belongs to the DeoC/FbaB aldolase family. DeoC type 2 subfamily.

It is found in the cytoplasm. It carries out the reaction 2-deoxy-D-ribose 5-phosphate = D-glyceraldehyde 3-phosphate + acetaldehyde. It participates in carbohydrate degradation; 2-deoxy-D-ribose 1-phosphate degradation; D-glyceraldehyde 3-phosphate and acetaldehyde from 2-deoxy-alpha-D-ribose 1-phosphate: step 2/2. Functionally, catalyzes a reversible aldol reaction between acetaldehyde and D-glyceraldehyde 3-phosphate to generate 2-deoxy-D-ribose 5-phosphate. This is Deoxyribose-phosphate aldolase from Shewanella sp. (strain MR-7).